Consider the following 79-residue polypeptide: Acyl carrier protein (79 aa).

In terms of domain architecture, Carrier spans 1–77 (MNNVEKKIKK…KSIDYINNKN (77 aa)). O-(pantetheine 4'-phosphoryl)serine is present on Ser37.

The protein belongs to the acyl carrier protein (ACP) family. Post-translationally, 4'-phosphopantetheine is transferred from CoA to a specific serine of apo-ACP by AcpS. This modification is essential for activity because fatty acids are bound in thioester linkage to the sulfhydryl of the prosthetic group.

Its subcellular location is the cytoplasm. It participates in lipid metabolism; fatty acid biosynthesis. Functionally, carrier of the growing fatty acid chain in fatty acid biosynthesis. In Buchnera aphidicola subsp. Schizaphis graminum (strain Sg), this protein is Acyl carrier protein.